The sequence spans 249 residues: 3-deoxy-D-manno-octulosonic acid kinase (249 aa).

Asp175 is an active-site residue.

Belongs to the protein kinase superfamily. KdkA/RfaP family.

The protein localises to the cell inner membrane. It catalyses the reaction an alpha-Kdo-(2-&gt;6)-lipid IVA + ATP = a 4-O-phospho-alpha-Kdo-(2-&gt;6)-lipid IVA + ADP + H(+). Its pathway is bacterial outer membrane biogenesis; LPS core biosynthesis. In terms of biological role, catalyzes the ATP-dependent phosphorylation of the 3-deoxy-D-manno-octulosonic acid (Kdo) residue in Kdo-lipid IV(A) at the 4-OH position. The sequence is that of 3-deoxy-D-manno-octulosonic acid kinase from Xylella fastidiosa (strain M23).